A 425-amino-acid polypeptide reads, in one-letter code: GTPase Obg (425 aa).

Residues 1 to 158 (MFRDSAKIYV…YSLILEMKMI (158 aa)) form the Obg domain. The 172-residue stretch at 159-330 (ADVGLVGYPN…LLYAVSETLK (172 aa)) folds into the OBG-type G domain. Residues 165–172 (GYPNVGKS), 190–194 (FTTLV), 212–215 (DIPG), 282–285 (NKMD), and 311–313 (SAA) contribute to the GTP site. Ser172 and Thr192 together coordinate Mg(2+). Residues 348–425 (YKVQEEKPFE…IYDTEFDYTR (78 aa)) form the OCT domain.

It belongs to the TRAFAC class OBG-HflX-like GTPase superfamily. OBG GTPase family. In terms of assembly, monomer. Mg(2+) is required as a cofactor.

Its subcellular location is the cytoplasm. In terms of biological role, an essential GTPase which binds GTP, GDP and possibly (p)ppGpp with moderate affinity, with high nucleotide exchange rates and a fairly low GTP hydrolysis rate. Plays a role in control of the cell cycle, stress response, ribosome biogenesis and in those bacteria that undergo differentiation, in morphogenesis control. The chain is GTPase Obg from Ruminiclostridium cellulolyticum (strain ATCC 35319 / DSM 5812 / JCM 6584 / H10) (Clostridium cellulolyticum).